A 177-amino-acid chain; its full sequence is Nucleoside triphosphate/diphosphate phosphatase (177 aa).

The active-site Proton donor is the Arg-23. Residues Asn-87, Asp-103, Asp-105, Asp-107, Asp-120, and Glu-123 each contribute to the Mg(2+) site.

This sequence belongs to the Ntdp family. Mg(2+) is required as a cofactor.

It catalyses the reaction a ribonucleoside 5'-triphosphate + H2O = a ribonucleoside 5'-diphosphate + phosphate + H(+). The catalysed reaction is a ribonucleoside 5'-diphosphate + H2O = a ribonucleoside 5'-phosphate + phosphate + H(+). Has nucleoside phosphatase activity towards nucleoside triphosphates and nucleoside diphosphates. In Streptococcus equi subsp. zooepidemicus (strain MGCS10565), this protein is Nucleoside triphosphate/diphosphate phosphatase.